The following is a 432-amino-acid chain: Putative D-alanyl-D-alanine carboxypeptidase (432 aa).

The helical; Signal-anchor transmembrane segment at Ala-7–Leu-25 threads the bilayer.

It belongs to the peptidase S12 family. YfeW subfamily.

The protein localises to the cell inner membrane. It catalyses the reaction Preferential cleavage: (Ac)2-L-Lys-D-Ala-|-D-Ala. Also transpeptidation of peptidyl-alanyl moieties that are N-acyl substituents of D-alanine.. This chain is Putative D-alanyl-D-alanine carboxypeptidase, found in Salmonella typhi.